The sequence spans 125 residues: Prefoldin subunit beta (125 aa).

Belongs to the prefoldin subunit beta family. As to quaternary structure, heterohexamer of two alpha and four beta subunits.

It localises to the cytoplasm. In terms of biological role, molecular chaperone capable of stabilizing a range of proteins. Seems to fulfill an ATP-independent, HSP70-like function in archaeal de novo protein folding. The chain is Prefoldin subunit beta from Sulfolobus acidocaldarius (strain ATCC 33909 / DSM 639 / JCM 8929 / NBRC 15157 / NCIMB 11770).